Consider the following 255-residue polypeptide: Putative OPA3-like protein CG13603 (255 aa).

Residues 108-154 (KENKKNELAQSEKMELTNMLTEMNFRLERQDAQIREMTRVLADLDSR) are a coiled coil. The tract at residues 168–187 (VPFDPDTPDQSASARNPKKF) is disordered. Positions 212–241 (DGRNRKAKEALQHLDEVAVQLEQSLGEAAT) form a coiled coil.

The protein belongs to the OPA3 family.

In Drosophila melanogaster (Fruit fly), this protein is Putative OPA3-like protein CG13603.